The primary structure comprises 444 residues: N-succinylarginine dihydrolase (444 aa).

Residues 19–28 (AGLSFGNVAS), N110, and 137–138 (HR) each bind substrate. E174 is a catalytic residue. Residue R214 participates in substrate binding. H250 is an active-site residue. Positions 252 and 362 each coordinate substrate. C368 (nucleophile) is an active-site residue.

The protein belongs to the succinylarginine dihydrolase family. As to quaternary structure, homodimer.

The enzyme catalyses N(2)-succinyl-L-arginine + 2 H2O + 2 H(+) = N(2)-succinyl-L-ornithine + 2 NH4(+) + CO2. It functions in the pathway amino-acid degradation; L-arginine degradation via AST pathway; L-glutamate and succinate from L-arginine: step 2/5. Catalyzes the hydrolysis of N(2)-succinylarginine into N(2)-succinylornithine, ammonia and CO(2). The sequence is that of N-succinylarginine dihydrolase from Shewanella frigidimarina (strain NCIMB 400).